A 275-amino-acid chain; its full sequence is MVHDLLRDRADLEARWNPSAYMQFARLRQRPVVELLDNIELCCPERIYDLGCGTGIATELLARRWPLAELHGVDSSVEMLEEAARLPIKASWERANLRHWCAERPASLLFAAAVLHFLEDHGKLLPRLLGQLAPGGCLAAHMPNWRDASWYRLMLDALDSAGPGGASLGSPALRYRLHRRNVLSLDNYYRLLAPLTAELDIWETEYLQVVDGNDPIFDWIKVSALRPVLGELDEEARRRFLDRYLELLHRHYPRELDGRTLFPFRRVFIVASLGR.

It belongs to the methyltransferase superfamily. Tam family.

It is found in the cytoplasm. It catalyses the reaction trans-aconitate + S-adenosyl-L-methionine = (E)-3-(methoxycarbonyl)pent-2-enedioate + S-adenosyl-L-homocysteine. Catalyzes the S-adenosylmethionine monomethyl esterification of trans-aconitate. This chain is Trans-aconitate 2-methyltransferase, found in Pseudomonas aeruginosa (strain UCBPP-PA14).